Here is a 206-residue protein sequence, read N- to C-terminus: MRRFALTVALPKGRMFREAYEVLKRAGLDLPEVEGERTLLHGKEGGVALLELRNKDVPIYVDLGIAEIGVVGKDVLLDSGRDLFEPVDLGFGACRLSLIRRPGDTGPIRRVATKYPNFTARLLKERGWAADVVELSGNIELAAVTGLADAVVDVVQTGATLRAAGLVEVEVLAHSTARLVVNRQALKLKRAVLKPLIQRLRELSGS.

The protein belongs to the ATP phosphoribosyltransferase family. Short subfamily. Heteromultimer composed of HisG and HisZ subunits.

It localises to the cytoplasm. The catalysed reaction is 1-(5-phospho-beta-D-ribosyl)-ATP + diphosphate = 5-phospho-alpha-D-ribose 1-diphosphate + ATP. The protein operates within amino-acid biosynthesis; L-histidine biosynthesis; L-histidine from 5-phospho-alpha-D-ribose 1-diphosphate: step 1/9. Its function is as follows. Catalyzes the condensation of ATP and 5-phosphoribose 1-diphosphate to form N'-(5'-phosphoribosyl)-ATP (PR-ATP). Has a crucial role in the pathway because the rate of histidine biosynthesis seems to be controlled primarily by regulation of HisG enzymatic activity. The sequence is that of ATP phosphoribosyltransferase from Thermus thermophilus (strain ATCC 27634 / DSM 579 / HB8).